The following is a 434-amino-acid chain: Glutamyl-tRNA reductase (434 aa).

Residues 49 to 52 (TCNR), Ser-109, 114 to 116 (EPQ), and Gln-120 contribute to the substrate site. Cys-50 acts as the Nucleophile in catalysis. An NADP(+)-binding site is contributed by 189–194 (GAGEMC).

This sequence belongs to the glutamyl-tRNA reductase family. In terms of assembly, homodimer.

The enzyme catalyses (S)-4-amino-5-oxopentanoate + tRNA(Glu) + NADP(+) = L-glutamyl-tRNA(Glu) + NADPH + H(+). It functions in the pathway porphyrin-containing compound metabolism; protoporphyrin-IX biosynthesis; 5-aminolevulinate from L-glutamyl-tRNA(Glu): step 1/2. Functionally, catalyzes the NADPH-dependent reduction of glutamyl-tRNA(Glu) to glutamate 1-semialdehyde (GSA). The polypeptide is Glutamyl-tRNA reductase (Geotalea uraniireducens (strain Rf4) (Geobacter uraniireducens)).